The following is a 109-amino-acid chain: UPF0122 protein Cbei_1174 (109 aa).

Belongs to the UPF0122 family.

Might take part in the signal recognition particle (SRP) pathway. This is inferred from the conservation of its genetic proximity to ftsY/ffh. May be a regulatory protein. This is UPF0122 protein Cbei_1174 from Clostridium beijerinckii (strain ATCC 51743 / NCIMB 8052) (Clostridium acetobutylicum).